The sequence spans 624 residues: MAGKRKRANAPDQTERRSSVRVQKVRQKALDEKARLVQERVKLLSDRKSEICVDDTELHEKEEENVDGSPKRRSPPKLTAMQKGKQKLSVSLNGKDVNLEPHLKVTKCLRLFNKQYLLCVQAKLSRPDLKGVTEMIKAKAILYPRKIIGDLPGIDVGHRFFSRAEMCAVGFHNHWLNGIDYMSMEYEKEYSNYKLPLAVSIVMSGQYEDDLDNADTVTYTGQGGHNLTGNKRQIKDQLLERGNLALKHCCEYNVPVRVTRGHNCKSSYTKRVYTYDGLYKVEKFWAQKGVSGFTVYKYRLKRLEGQPELTTDQVNFVAGRIPTSTSEIEGLVCEDISGGLEFKGIPATNRVDDSPVSPTSGFTYIKSLIIEPNVIIPKSSTGCNCRGSCTDSKKCACAKLNGGNFPYVDLNDGRLIESRDVVFECGPHCGCGPKCVNRTSQKRLRFNLEVFRSAKKGWAVRSWEYIPAGSPVCEYIGVVRRTADVDTISDNEYIFEIDCQQTMQGLGGRQRRLRDVAVPMNNGVSQSSEDENAPEFCIDAGSTGNFARFINHSCEPNLFVQCVLSSHQDIRLARVVLFAADNISPMQELTYDYGYALDSVHGPDGKVKQLACYCGALNCRKRLY.

Disordered stretches follow at residues 1-25 (MAGKRKRANAPDQTERRSSVRVQKV) and 54-86 (DDTELHEKEEENVDGSPKRRSPPKLTAMQKGKQ). Residues 149–302 (GDLPGIDVGH…FTVYKYRLKR (154 aa)) form the YDG domain. Positions 381–443 (TGCNCRGSCT…KCVNRTSQKR (63 aa)) constitute a Pre-SET domain. Positions 383, 385, 389, 395, 397, 425, 429, 431, and 435 each coordinate Zn(2+). Positions 446-594 (FNLEVFRSAK…PMQELTYDYG (149 aa)) constitute an SET domain. S-adenosyl-L-methionine contacts are provided by residues 456 to 458 (KGW), tyrosine 493, arginine 548, and 551 to 552 (NH). Cysteine 554, cysteine 612, cysteine 614, and cysteine 619 together coordinate Zn(2+). Residues 608-624 (KQLACYCGALNCRKRLY) form the Post-SET domain.

Belongs to the class V-like SAM-binding methyltransferase superfamily. Histone-lysine methyltransferase family. Suvar3-9 subfamily. Interacts with H3 histone. Expressed in leaves stems and flowers.

The protein resides in the nucleus. The protein localises to the chromosome. It is found in the centromere. The enzyme catalyses N(6)-methyl-L-lysyl(9)-[histone H3] + S-adenosyl-L-methionine = N(6),N(6)-dimethyl-L-lysyl(9)-[histone H3] + S-adenosyl-L-homocysteine + H(+). It carries out the reaction L-lysyl(9)-[histone H3] + S-adenosyl-L-methionine = N(6)-methyl-L-lysyl(9)-[histone H3] + S-adenosyl-L-homocysteine + H(+). Functionally, histone methyltransferase. Methylates 'Lys-9' of histone H3. H3 'Lys-9' methylation represents a specific tag for epigenetic transcriptional repression. The silencing mechanism via DNA CpNpG methylation requires the targeting of chromomethylase CMT3 to methylated histones, probably through an interaction with an HP1-like adapter. By its function, KYP is directly required for the maintenance of the DNA CpNpG and asymmetric methylation. Involved in the silencing of transposable elements. The chain is Histone-lysine N-methyltransferase, H3 lysine-9 specific SUVH4 (SUVH4) from Arabidopsis thaliana (Mouse-ear cress).